A 207-amino-acid chain; its full sequence is Non-structural protein 5 (207 aa).

Residues Asp2 to Glu69 enclose the DRBM domain.

The polypeptide is Non-structural protein 5 (Segment-12) (Banna virus (BAV)).